A 417-amino-acid polypeptide reads, in one-letter code: Serine hydroxymethyltransferase (417 aa).

Residues L122 and 126–128 contribute to the (6S)-5,6,7,8-tetrahydrofolate site; that span reads GHL. An N6-(pyridoxal phosphate)lysine modification is found at K230. 355–357 provides a ligand contact to (6S)-5,6,7,8-tetrahydrofolate; that stretch reads SPF.

It belongs to the SHMT family. In terms of assembly, homodimer. The cofactor is pyridoxal 5'-phosphate.

The protein localises to the cytoplasm. It carries out the reaction (6R)-5,10-methylene-5,6,7,8-tetrahydrofolate + glycine + H2O = (6S)-5,6,7,8-tetrahydrofolate + L-serine. It functions in the pathway one-carbon metabolism; tetrahydrofolate interconversion. It participates in amino-acid biosynthesis; glycine biosynthesis; glycine from L-serine: step 1/1. Catalyzes the reversible interconversion of serine and glycine with tetrahydrofolate (THF) serving as the one-carbon carrier. This reaction serves as the major source of one-carbon groups required for the biosynthesis of purines, thymidylate, methionine, and other important biomolecules. Also exhibits THF-independent aldolase activity toward beta-hydroxyamino acids, producing glycine and aldehydes, via a retro-aldol mechanism. In Francisella tularensis subsp. holarctica (strain LVS), this protein is Serine hydroxymethyltransferase.